A 325-amino-acid polypeptide reads, in one-letter code: Glutarate 2-hydroxylase (325 aa).

Positions 160, 162, and 292 each coordinate Fe cation.

Belongs to the glutarate hydroxylase family. Homotetramer. The cofactor is Fe(2+).

The catalysed reaction is glutarate + 2-oxoglutarate + O2 = (S)-2-hydroxyglutarate + succinate + CO2. The protein operates within amino-acid degradation. Its function is as follows. Acts as an alpha-ketoglutarate-dependent dioxygenase catalyzing hydroxylation of glutarate (GA) to L-2-hydroxyglutarate (L2HG). Functions in a L-lysine degradation pathway that proceeds via cadaverine, glutarate and L-2-hydroxyglutarate. This chain is Glutarate 2-hydroxylase, found in Escherichia coli O7:K1 (strain IAI39 / ExPEC).